The following is a 194-amino-acid chain: Elongation factor P (194 aa).

It belongs to the elongation factor P family.

It localises to the cytoplasm. The protein operates within protein biosynthesis; polypeptide chain elongation. Functionally, involved in peptide bond synthesis. Stimulates efficient translation and peptide-bond synthesis on native or reconstituted 70S ribosomes in vitro. Probably functions indirectly by altering the affinity of the ribosome for aminoacyl-tRNA, thus increasing their reactivity as acceptors for peptidyl transferase. The protein is Elongation factor P of Hydrogenobaculum sp. (strain Y04AAS1).